We begin with the raw amino-acid sequence, 345 residues long: tRNA N6-adenosine threonylcarbamoyltransferase (345 aa).

Positions 111 and 115 each coordinate Fe cation. Substrate is bound by residues 134–138 (LVSGG), D167, G180, D184, and N278. D306 is a binding site for Fe cation.

The protein belongs to the KAE1 / TsaD family. The cofactor is Fe(2+).

Its subcellular location is the cytoplasm. The enzyme catalyses L-threonylcarbamoyladenylate + adenosine(37) in tRNA = N(6)-L-threonylcarbamoyladenosine(37) in tRNA + AMP + H(+). In terms of biological role, required for the formation of a threonylcarbamoyl group on adenosine at position 37 (t(6)A37) in tRNAs that read codons beginning with adenine. Is involved in the transfer of the threonylcarbamoyl moiety of threonylcarbamoyl-AMP (TC-AMP) to the N6 group of A37, together with TsaE and TsaB. TsaD likely plays a direct catalytic role in this reaction. In Cyanothece sp. (strain PCC 7425 / ATCC 29141), this protein is tRNA N6-adenosine threonylcarbamoyltransferase.